The sequence spans 458 residues: Bifunctional protein GlmU (458 aa).

The pyrophosphorylase stretch occupies residues 1 to 232 (MISPLSVIIL…TFEIEGVNNR (232 aa)). UDP-N-acetyl-alpha-D-glucosamine-binding positions include 10–13 (LAAG), lysine 24, glutamine 79, 84–85 (GT), 106–108 (YGD), glycine 142, glutamate 157, asparagine 172, and asparagine 230. Position 108 (aspartate 108) interacts with Mg(2+). Asparagine 230 contacts Mg(2+). The segment at 233–253 (QQLASLERTWQGKLVADLQEA) is linker. The interval 254-458 (GVQFADPTRV…KDNFQRPTKK (205 aa)) is N-acetyltransferase. UDP-N-acetyl-alpha-D-glucosamine is bound by residues arginine 336 and lysine 354. Residue histidine 366 is the Proton acceptor of the active site. UDP-N-acetyl-alpha-D-glucosamine-binding residues include tyrosine 369 and asparagine 380. Acetyl-CoA-binding positions include alanine 383, 389–390 (NY), serine 408, alanine 426, and arginine 443.

In the N-terminal section; belongs to the N-acetylglucosamine-1-phosphate uridyltransferase family. This sequence in the C-terminal section; belongs to the transferase hexapeptide repeat family. Homotrimer. Mg(2+) serves as cofactor.

It is found in the cytoplasm. It catalyses the reaction alpha-D-glucosamine 1-phosphate + acetyl-CoA = N-acetyl-alpha-D-glucosamine 1-phosphate + CoA + H(+). The catalysed reaction is N-acetyl-alpha-D-glucosamine 1-phosphate + UTP + H(+) = UDP-N-acetyl-alpha-D-glucosamine + diphosphate. It functions in the pathway nucleotide-sugar biosynthesis; UDP-N-acetyl-alpha-D-glucosamine biosynthesis; N-acetyl-alpha-D-glucosamine 1-phosphate from alpha-D-glucosamine 6-phosphate (route II): step 2/2. The protein operates within nucleotide-sugar biosynthesis; UDP-N-acetyl-alpha-D-glucosamine biosynthesis; UDP-N-acetyl-alpha-D-glucosamine from N-acetyl-alpha-D-glucosamine 1-phosphate: step 1/1. Its pathway is bacterial outer membrane biogenesis; LPS lipid A biosynthesis. Functionally, catalyzes the last two sequential reactions in the de novo biosynthetic pathway for UDP-N-acetylglucosamine (UDP-GlcNAc). The C-terminal domain catalyzes the transfer of acetyl group from acetyl coenzyme A to glucosamine-1-phosphate (GlcN-1-P) to produce N-acetylglucosamine-1-phosphate (GlcNAc-1-P), which is converted into UDP-GlcNAc by the transfer of uridine 5-monophosphate (from uridine 5-triphosphate), a reaction catalyzed by the N-terminal domain. This Psychrobacter arcticus (strain DSM 17307 / VKM B-2377 / 273-4) protein is Bifunctional protein GlmU.